Reading from the N-terminus, the 213-residue chain is Glycerol-3-phosphate acyltransferase (213 aa).

6 helical membrane-spanning segments follow: residues 3–23, 54–76, 83–100, 110–130, 142–162, and 163–183; these read ILLLILIAYLLGSIQTGLWIG, TITFLVDMLKGTLAVLLPIWLGI, IIGFFAIIGHVFPFFTGF, AGVLLGFVPLYFVFLLLVFAL, SITAAVVGLITLATFPAIHFL, and LDGYDPIFSAVLIIIVLVIIF.

It belongs to the PlsY family. In terms of assembly, probably interacts with PlsX.

It localises to the cell membrane. The catalysed reaction is an acyl phosphate + sn-glycerol 3-phosphate = a 1-acyl-sn-glycero-3-phosphate + phosphate. Its pathway is lipid metabolism; phospholipid metabolism. Catalyzes the transfer of an acyl group from acyl-phosphate (acyl-PO(4)) to glycerol-3-phosphate (G3P) to form lysophosphatidic acid (LPA). This enzyme utilizes acyl-phosphate as fatty acyl donor, but not acyl-CoA or acyl-ACP. In Streptococcus thermophilus (strain ATCC BAA-491 / LMD-9), this protein is Glycerol-3-phosphate acyltransferase.